Here is a 330-residue protein sequence, read N- to C-terminus: Small ribosomal subunit protein uS2 (330 aa).

The protein belongs to the universal ribosomal protein uS2 family.

The protein is Small ribosomal subunit protein uS2 of Bradyrhizobium sp. (strain BTAi1 / ATCC BAA-1182).